The sequence spans 233 residues: MAKLTKRARLIREKVEATKSYDINEAVALLKELATAKFVESVDVAVNLGVDPRKSDQNVRGATVLPHGTGREVRVAVFTQGANADAAKEAGAELVGMDELAAQVKAGEMNFDVVIASPDAMRVVGQLGQILGPRGLMPNPKTGTVTPNVAEAVKNAKAGQVRYRNDKNGIIHTTIGKVDFEPVQLKENLDALLGALIKAKPAAAKGVFVKKVSISTTMGAGVAVDQSTLNPTA.

It belongs to the universal ribosomal protein uL1 family. In terms of assembly, part of the 50S ribosomal subunit.

Binds directly to 23S rRNA. The L1 stalk is quite mobile in the ribosome, and is involved in E site tRNA release. Functionally, protein L1 is also a translational repressor protein, it controls the translation of the L11 operon by binding to its mRNA. The protein is Large ribosomal subunit protein uL1 of Shewanella loihica (strain ATCC BAA-1088 / PV-4).